A 354-amino-acid chain; its full sequence is Photosystem II D2 protein (354 aa).

At Thr2 the chain carries N-acetylthreonine. Thr2 is subject to Phosphothreonine. Residues 42-62 traverse the membrane as a helical segment; that stretch reads CAYFALGGWFTGTTFVTSWYT. His119 lines the chlorophyll a pocket. The chain crosses the membrane as a helical span at residues 126 to 142; the sequence is GFMLRQFELARSVQLRP. Positions 131 and 144 each coordinate pheophytin a. The helical transmembrane segment at 154-167 threads the bilayer; that stretch reads VFVSVFLIYPLGQS. His199 contacts chlorophyll a. The chain crosses the membrane as a helical span at residues 209–229; the sequence is AALLCAIHGATVENTLFEDGD. His216 and Phe263 together coordinate a plastoquinone. His216 is a Fe cation binding site. His270 contributes to the Fe cation binding site. Residues 280–296 traverse the membrane as a helical segment; sequence GLWMSALGVVGLALNLR.

Belongs to the reaction center PufL/M/PsbA/D family. PSII is composed of 1 copy each of membrane proteins PsbA, PsbB, PsbC, PsbD, PsbE, PsbF, PsbH, PsbI, PsbJ, PsbK, PsbL, PsbM, PsbT, PsbX, PsbY, PsbZ, Psb30/Ycf12, at least 3 peripheral proteins of the oxygen-evolving complex and a large number of cofactors. It forms dimeric complexes. Requires The D1/D2 heterodimer binds P680, chlorophylls that are the primary electron donor of PSII, and subsequent electron acceptors. It shares a non-heme iron and each subunit binds pheophytin, quinone, additional chlorophylls, carotenoids and lipids. There is also a Cl(-1) ion associated with D1 and D2, which is required for oxygen evolution. The PSII complex binds additional chlorophylls, carotenoids and specific lipids. as cofactor.

The protein localises to the plastid. It is found in the chloroplast thylakoid membrane. It carries out the reaction 2 a plastoquinone + 4 hnu + 2 H2O = 2 a plastoquinol + O2. Its function is as follows. Photosystem II (PSII) is a light-driven water:plastoquinone oxidoreductase that uses light energy to abstract electrons from H(2)O, generating O(2) and a proton gradient subsequently used for ATP formation. It consists of a core antenna complex that captures photons, and an electron transfer chain that converts photonic excitation into a charge separation. The D1/D2 (PsbA/PsbD) reaction center heterodimer binds P680, the primary electron donor of PSII as well as several subsequent electron acceptors. D2 is needed for assembly of a stable PSII complex. The protein is Photosystem II D2 protein of Piper cenocladum (Ant piper).